The following is a 176-amino-acid chain: MKVLLCDLLLLSLFSSVFSSCQRDCLTCQEKLHPALDSFDLEVCILECEEKVFPSPLWTPCTKVMARSSWQLSPAAPEHVAAALYQPRASEMQHLRRMPRVRSLFQEQEEPEPGMEEAGEMEQKQLQKRFGGFTGARKSARKLANQKRFSEFMRQYLVLSMQSSQRRRTLHQNGNV.

An N-terminal signal peptide occupies residues 1 to 19; that stretch reads MKVLLCDLLLLSLFSSVFS. 2 consecutive propeptides follow at residues 20–95 and 169–176; these read SCQR…MQHL and TLHQNGNV.

This sequence belongs to the opioid neuropeptide precursor family. In terms of processing, specific enzymatic cleavages at paired basic residues probably yield other active peptides besides nociceptin. The N-terminal domain contains 6 conserved cysteines thought to be involved in disulfide bonding and/or processing. Predominantly expressed in the brain and spinal cord. Also expressed and secreted by peripheral blood neutrophils following degranulation.

Its subcellular location is the secreted. Ligand of the opioid receptor-like receptor OPRL1. It may act as a transmitter in the brain by modulating nociceptive and locomotor behavior. May be involved in neuronal differentiation and development. In terms of biological role, blocks nociceptin action in pain transmission by inhibiting nociceptin-induced hyperalgesia and allodynia. Its function is as follows. Has potent analgesic activity. The sequence is that of Prepronociceptin (PNOC) from Homo sapiens (Human).